Here is a 399-residue protein sequence, read N- to C-terminus: Argininosuccinate synthase (399 aa).

8 to 16 (AYSGGLDTS) provides a ligand contact to ATP. Tyr-87 lines the L-citrulline pocket. ATP is bound at residue Gly-117. Positions 119, 123, and 124 each coordinate L-aspartate. Asn-123 is a binding site for L-citrulline. Positions 127, 175, 260, and 272 each coordinate L-citrulline.

This sequence belongs to the argininosuccinate synthase family. Type 1 subfamily. In terms of assembly, homotetramer.

The protein resides in the cytoplasm. It catalyses the reaction L-citrulline + L-aspartate + ATP = 2-(N(omega)-L-arginino)succinate + AMP + diphosphate + H(+). It participates in amino-acid biosynthesis; L-arginine biosynthesis; L-arginine from L-ornithine and carbamoyl phosphate: step 2/3. The protein is Argininosuccinate synthase of Mycolicibacterium smegmatis (strain ATCC 700084 / mc(2)155) (Mycobacterium smegmatis).